The primary structure comprises 196 residues: Putative NADH dehydrogenase/NAD(P)H nitroreductase SGR_2476 (196 aa).

Belongs to the nitroreductase family. HadB/RutE subfamily. It depends on FMN as a cofactor.

This Streptomyces griseus subsp. griseus (strain JCM 4626 / CBS 651.72 / NBRC 13350 / KCC S-0626 / ISP 5235) protein is Putative NADH dehydrogenase/NAD(P)H nitroreductase SGR_2476.